A 195-amino-acid polypeptide reads, in one-letter code: Shikimate kinase (195 aa).

26 to 31 (GSGKST) contacts ATP. Ser-30 lines the Mg(2+) pocket. Substrate contacts are provided by Asp-48, Arg-72, and Gly-94. Residue Arg-132 participates in ATP binding. A substrate-binding site is contributed by Arg-151.

The protein belongs to the shikimate kinase family. Monomer. Requires Mg(2+) as cofactor.

It is found in the cytoplasm. It catalyses the reaction shikimate + ATP = 3-phosphoshikimate + ADP + H(+). The protein operates within metabolic intermediate biosynthesis; chorismate biosynthesis; chorismate from D-erythrose 4-phosphate and phosphoenolpyruvate: step 5/7. Functionally, catalyzes the specific phosphorylation of the 3-hydroxyl group of shikimic acid using ATP as a cosubstrate. The sequence is that of Shikimate kinase from Synechococcus sp. (strain RCC307).